A 335-amino-acid polypeptide reads, in one-letter code: Fructose-1,6-bisphosphatase class 1 (335 aa).

Mg(2+)-binding residues include Glu-90, Asp-112, Leu-114, and Asp-115. Residues 115–118 (DGSS), Asn-210, and Lys-276 each bind substrate. Residue Glu-282 coordinates Mg(2+).

It belongs to the FBPase class 1 family. Homotetramer. Mg(2+) is required as a cofactor.

It localises to the cytoplasm. It catalyses the reaction beta-D-fructose 1,6-bisphosphate + H2O = beta-D-fructose 6-phosphate + phosphate. The protein operates within carbohydrate biosynthesis; gluconeogenesis. This Ectopseudomonas mendocina (strain ymp) (Pseudomonas mendocina) protein is Fructose-1,6-bisphosphatase class 1.